The chain runs to 428 residues: Hemagglutinin-esterase (428 aa).

The N-terminal stretch at M1–V19 is a signal peptide. The interval T9–A129 is esterase domain 1. At F20–V404 the chain is on the virion surface side. S42 serves as the catalytic Nucleophile. A disulfide bond links C46 and C67. 5 N-linked (GlcNAc...) asparagine; by host glycosylation sites follow: N91, N149, N193, N243, and N313. Cysteines 115 and 164 form a disulfide. The receptor binding stretch occupies residues R130 to Y278. Intrachain disulfides connect C199–C288 and C207–C261. Residues L279–Y392 form an esterase domain 2 region. Residues C319 and C324 are joined by a disulfide bond. 2 N-linked (GlcNAc...) asparagine; by host glycosylation sites follow: N328 and N332. Catalysis depends on charge relay system residues D339 and H342. Residues N357 and N371 are each glycosylated (N-linked (GlcNAc...) asparagine; by host). An intrachain disulfide couples C360 to C384. The helical transmembrane segment at I405 to F425 threads the bilayer. The Intravirion portion of the chain corresponds to Y426–G428.

This sequence belongs to the influenza type C/coronaviruses hemagglutinin-esterase family. Homodimer; disulfide-linked. Forms a complex with the M protein in the pre-Golgi. Associates then with S-M complex to form a ternary complex S-M-HE. In terms of processing, N-glycosylated in the RER. N-glycosylated in the host RER.

The protein resides in the virion membrane. Its subcellular location is the host cell membrane. It carries out the reaction N-acetyl-9-O-acetylneuraminate + H2O = N-acetylneuraminate + acetate + H(+). The catalysed reaction is N-acetyl-4-O-acetylneuraminate + H2O = N-acetylneuraminate + acetate + H(+). Functionally, structural protein that makes short spikes at the surface of the virus. Contains receptor binding and receptor-destroying activities. Mediates de-O-acetylation of N-acetyl-4-O-acetylneuraminic acid, which is probably the receptor determinant recognized by the virus on the surface of erythrocytes and susceptible cells. This receptor-destroying activity is important for virus release as it probably helps preventing self-aggregation and ensures the efficient spread of the progeny virus from cell to cell. May serve as a secondary viral attachment protein for initiating infection, the spike protein being the major one. May become a target for both the humoral and the cellular branches of the immune system. This Mus musculus (Mouse) protein is Hemagglutinin-esterase.